The following is a 228-amino-acid chain: Phosphatidylglycerophosphate phosphatase PTPMT2 (228 aa).

Over residues methionine 1 to threonine 10 the composition is skewed to acidic residues. Residues methionine 1 to lysine 30 form a disordered region. Tyrosine 48 and aspartate 126 together coordinate substrate. The Tyrosine-protein phosphatase domain occupies tryptophan 66 to proline 213. Cysteine 157 functions as the Phosphocysteine intermediate in the catalytic mechanism. A Glucan phosphatase signature motif CXAGXGR motif is present at residues cysteine 157–arginine 163. Lysine 158–arginine 163 is a substrate binding site.

This sequence belongs to the protein-tyrosine phosphatase family. Non-receptor class dual specificity subfamily. In terms of tissue distribution, expressed in roots, leaves, stems and flowers. Expressed at low levels in stems and flowers.

The catalysed reaction is O-phospho-L-seryl-[protein] + H2O = L-seryl-[protein] + phosphate. It carries out the reaction O-phospho-L-threonyl-[protein] + H2O = L-threonyl-[protein] + phosphate. It catalyses the reaction O-phospho-L-tyrosyl-[protein] + H2O = L-tyrosyl-[protein] + phosphate. The enzyme catalyses a 1,2-diacyl-sn-glycero-3-phospho-(1'-sn-glycero-3'-phosphate) + H2O = a 1,2-diacyl-sn-glycero-3-phospho-(1'-sn-glycerol) + phosphate. It participates in phospholipid metabolism; phosphatidylglycerol biosynthesis; phosphatidylglycerol from CDP-diacylglycerol: step 2/2. Its function is as follows. Exhibits phosphatidylglycerophosphate phosphatase activity. Involved in root growth and columella cells organization. May possess protein phosphatase activity. This is Phosphatidylglycerophosphate phosphatase PTPMT2 from Arabidopsis thaliana (Mouse-ear cress).